Consider the following 320-residue polypeptide: Ferrochelatase (320 aa).

Fe cation-binding residues include histidine 194 and glutamate 275.

Belongs to the ferrochelatase family. Monomer.

It is found in the cytoplasm. The enzyme catalyses heme b + 2 H(+) = protoporphyrin IX + Fe(2+). It participates in porphyrin-containing compound metabolism; protoheme biosynthesis; protoheme from protoporphyrin-IX: step 1/1. Functionally, catalyzes the ferrous insertion into protoporphyrin IX. The sequence is that of Ferrochelatase from Escherichia coli O81 (strain ED1a).